Here is a 337-residue protein sequence, read N- to C-terminus: Neurogenic differentiation factor 6 (337 aa).

The interval 43–82 is disordered; it reads LRGKSIKRAPGEETEKEEEEEDREEEDENGLPRRRGLRKK. Positions 54 to 71 are enriched in acidic residues; it reads EETEKEEEEEDREEEDEN. Residues 80-86 carry the Nuclear localization signal motif; sequence RKKKTTK. Residues 94-146 form the bHLH domain; it reads FRRQEANARERNRMHGLNDALDNLRKVVPCYSKTQKLSKIETLRLAKNYIWAL.

In terms of assembly, efficient DNA binding requires dimerization with another bHLH protein.

It localises to the nucleus. Its function is as follows. Activates E box-dependent transcription in collaboration with TCF3/E47. May be a trans-acting factor involved in the development and maintenance of the mammalian nervous system. Transactivates the promoter of its own gene. This Homo sapiens (Human) protein is Neurogenic differentiation factor 6 (NEUROD6).